The following is a 351-amino-acid chain: Thiamine-phosphate synthase (351 aa).

A unknown region spans residues 1 to 129 (MVEPYSQQKQ…GQACKQMRYR (129 aa)). The tract at residues 130 to 351 (VYSLETNLMG…SQLNRIKPES (222 aa)) is thiamine-phosphate synthase. Residues 177 to 181 (QYRDK) and N209 contribute to the 4-amino-2-methyl-5-(diphosphooxymethyl)pyrimidine site. Mg(2+) is bound by residues D210 and D229. Residue S248 coordinates 4-amino-2-methyl-5-(diphosphooxymethyl)pyrimidine. 274–276 (TPT) serves as a coordination point for 2-[(2R,5Z)-2-carboxy-4-methylthiazol-5(2H)-ylidene]ethyl phosphate. K277 is a binding site for 4-amino-2-methyl-5-(diphosphooxymethyl)pyrimidine. Position 304 (G304) interacts with 2-[(2R,5Z)-2-carboxy-4-methylthiazol-5(2H)-ylidene]ethyl phosphate.

This sequence belongs to the thiamine-phosphate synthase family. Mg(2+) serves as cofactor.

The catalysed reaction is 2-[(2R,5Z)-2-carboxy-4-methylthiazol-5(2H)-ylidene]ethyl phosphate + 4-amino-2-methyl-5-(diphosphooxymethyl)pyrimidine + 2 H(+) = thiamine phosphate + CO2 + diphosphate. The enzyme catalyses 2-(2-carboxy-4-methylthiazol-5-yl)ethyl phosphate + 4-amino-2-methyl-5-(diphosphooxymethyl)pyrimidine + 2 H(+) = thiamine phosphate + CO2 + diphosphate. It catalyses the reaction 4-methyl-5-(2-phosphooxyethyl)-thiazole + 4-amino-2-methyl-5-(diphosphooxymethyl)pyrimidine + H(+) = thiamine phosphate + diphosphate. It functions in the pathway cofactor biosynthesis; thiamine diphosphate biosynthesis; thiamine phosphate from 4-amino-2-methyl-5-diphosphomethylpyrimidine and 4-methyl-5-(2-phosphoethyl)-thiazole: step 1/1. Condenses 4-methyl-5-(beta-hydroxyethyl)thiazole monophosphate (THZ-P) and 2-methyl-4-amino-5-hydroxymethyl pyrimidine pyrophosphate (HMP-PP) to form thiamine monophosphate (TMP). In Nostoc sp. (strain PCC 7120 / SAG 25.82 / UTEX 2576), this protein is Thiamine-phosphate synthase.